A 432-amino-acid polypeptide reads, in one-letter code: Glutamyl-tRNA reductase (432 aa).

Residues 49-52 (TCNR), Ser-109, 114-116 (EGQ), and Gln-120 contribute to the substrate site. Cys-50 serves as the catalytic Nucleophile. 198 to 203 (GAGRMS) is an NADP(+) binding site.

It belongs to the glutamyl-tRNA reductase family. Homodimer.

It catalyses the reaction (S)-4-amino-5-oxopentanoate + tRNA(Glu) + NADP(+) = L-glutamyl-tRNA(Glu) + NADPH + H(+). The protein operates within porphyrin-containing compound metabolism; protoporphyrin-IX biosynthesis; 5-aminolevulinate from L-glutamyl-tRNA(Glu): step 1/2. It functions in the pathway porphyrin-containing compound metabolism; chlorophyll biosynthesis. Its function is as follows. Catalyzes the NADPH-dependent reduction of glutamyl-tRNA(Glu) to glutamate 1-semialdehyde (GSA). The polypeptide is Glutamyl-tRNA reductase (Synechococcus sp. (strain CC9605)).